We begin with the raw amino-acid sequence, 269 residues long: 4-hydroxy-tetrahydrodipicolinate reductase (269 aa).

Residue 11 to 16 (GPIGRM) coordinates NAD(+). Lysine 39 lines the NADP(+) pocket. Residues 101 to 103 (GTT) and 125 to 128 (ASNF) each bind NAD(+). Histidine 158 serves as the catalytic Proton donor/acceptor. (S)-2,3,4,5-tetrahydrodipicolinate is bound at residue histidine 159. The active-site Proton donor is the lysine 162. Residue 168 to 169 (GT) participates in (S)-2,3,4,5-tetrahydrodipicolinate binding.

It belongs to the DapB family. In terms of assembly, homotetramer.

It is found in the cytoplasm. The enzyme catalyses (S)-2,3,4,5-tetrahydrodipicolinate + NAD(+) + H2O = (2S,4S)-4-hydroxy-2,3,4,5-tetrahydrodipicolinate + NADH + H(+). The catalysed reaction is (S)-2,3,4,5-tetrahydrodipicolinate + NADP(+) + H2O = (2S,4S)-4-hydroxy-2,3,4,5-tetrahydrodipicolinate + NADPH + H(+). It participates in amino-acid biosynthesis; L-lysine biosynthesis via DAP pathway; (S)-tetrahydrodipicolinate from L-aspartate: step 4/4. Catalyzes the conversion of 4-hydroxy-tetrahydrodipicolinate (HTPA) to tetrahydrodipicolinate. The protein is 4-hydroxy-tetrahydrodipicolinate reductase of Buchnera aphidicola subsp. Acyrthosiphon pisum (strain APS) (Acyrthosiphon pisum symbiotic bacterium).